Here is a 200-residue protein sequence, read N- to C-terminus: Orotate phosphoribosyltransferase (200 aa).

Residues Arg95, Lys99, His101, and 121–129 (DDVATTGGS) each bind 5-phospho-alpha-D-ribose 1-diphosphate. Residues Thr125 and Arg153 each contribute to the orotate site.

This sequence belongs to the purine/pyrimidine phosphoribosyltransferase family. PyrE subfamily. In terms of assembly, homodimer. Requires Mg(2+) as cofactor.

It carries out the reaction orotidine 5'-phosphate + diphosphate = orotate + 5-phospho-alpha-D-ribose 1-diphosphate. Its pathway is pyrimidine metabolism; UMP biosynthesis via de novo pathway; UMP from orotate: step 1/2. Its function is as follows. Catalyzes the transfer of a ribosyl phosphate group from 5-phosphoribose 1-diphosphate to orotate, leading to the formation of orotidine monophosphate (OMP). This is Orotate phosphoribosyltransferase from Cenarchaeum symbiosum (strain A).